Here is a 120-residue protein sequence, read N- to C-terminus: Large ribosomal subunit protein uL14 (120 aa).

The protein belongs to the universal ribosomal protein uL14 family. Part of the 50S ribosomal subunit. Forms a cluster with proteins L3 and L19. In the 70S ribosome, L14 and L19 interact and together make contacts with the 16S rRNA in bridges B5 and B8.

Functionally, binds to 23S rRNA. Forms part of two intersubunit bridges in the 70S ribosome. This is Large ribosomal subunit protein uL14 from Aster yellows witches'-broom phytoplasma (strain AYWB).